A 125-amino-acid polypeptide reads, in one-letter code: S-adenosylmethionine decarboxylase proenzyme (125 aa).

The Schiff-base intermediate with substrate; via pyruvic acid role is filled by Ser61. Ser61 is subject to Pyruvic acid (Ser); by autocatalysis. Catalysis depends on His66, which acts as the Proton acceptor; for processing activity. Cys81 functions as the Proton donor; for catalytic activity in the catalytic mechanism.

The protein belongs to the prokaryotic AdoMetDC family. Type 1 subfamily. As to quaternary structure, heterotetramer of two alpha and two beta chains arranged as a dimer of alpha/beta heterodimers. Pyruvate is required as a cofactor. Is synthesized initially as an inactive proenzyme. Formation of the active enzyme involves a self-maturation process in which the active site pyruvoyl group is generated from an internal serine residue via an autocatalytic post-translational modification. Two non-identical subunits are generated from the proenzyme in this reaction, and the pyruvate is formed at the N-terminus of the alpha chain, which is derived from the carboxyl end of the proenzyme. The post-translation cleavage follows an unusual pathway, termed non-hydrolytic serinolysis, in which the side chain hydroxyl group of the serine supplies its oxygen atom to form the C-terminus of the beta chain, while the remainder of the serine residue undergoes an oxidative deamination to produce ammonia and the pyruvoyl group blocking the N-terminus of the alpha chain.

The catalysed reaction is S-adenosyl-L-methionine + H(+) = S-adenosyl 3-(methylsulfanyl)propylamine + CO2. It participates in amine and polyamine biosynthesis; S-adenosylmethioninamine biosynthesis; S-adenosylmethioninamine from S-adenosyl-L-methionine: step 1/1. Functionally, catalyzes the decarboxylation of S-adenosylmethionine to S-adenosylmethioninamine (dcAdoMet), the propylamine donor required for the synthesis of the polyamines spermine and spermidine from the diamine putrescine. The sequence is that of S-adenosylmethionine decarboxylase proenzyme from Prochlorococcus marinus (strain MIT 9313).